A 516-amino-acid polypeptide reads, in one-letter code: Cytochrome P450 1A1 (516 aa).

The interval 25–36 (FRPQVPKGLKSP) is mitochondrial targeting signal. O-linked (GlcNAc) serine glycosylation occurs at serine 63. Phenylalanine 220 is a binding site for substrate. Cysteine 453 lines the heme pocket.

The protein belongs to the cytochrome P450 family. In terms of assembly, interacts with cytosolic chaperones HSP70 and HSP90; this interaction is required for initial targeting to mitochondria. Interacts (via mitochondrial targeting signal) with TOMM40 (via N-terminus); this interaction is required for translocation across the mitochondrial outer membrane. It depends on heme as a cofactor. As to expression, constitutively expressed in liver.

It is found in the endoplasmic reticulum membrane. The protein localises to the mitochondrion inner membrane. The protein resides in the microsome membrane. It localises to the cytoplasm. The enzyme catalyses an organic molecule + reduced [NADPH--hemoprotein reductase] + O2 = an alcohol + oxidized [NADPH--hemoprotein reductase] + H2O + H(+). The catalysed reaction is estrone + reduced [NADPH--hemoprotein reductase] + O2 = 2-hydroxyestrone + oxidized [NADPH--hemoprotein reductase] + H2O + H(+). It carries out the reaction estrone + reduced [NADPH--hemoprotein reductase] + O2 = 4-hydroxyestrone + oxidized [NADPH--hemoprotein reductase] + H2O + H(+). It catalyses the reaction estrone + reduced [NADPH--hemoprotein reductase] + O2 = 6alpha-hydroxyestrone + oxidized [NADPH--hemoprotein reductase] + H2O + H(+). The enzyme catalyses estrone + reduced [NADPH--hemoprotein reductase] + O2 = 15alpha-hydroxyestrone + oxidized [NADPH--hemoprotein reductase] + H2O + H(+). The catalysed reaction is estrone + reduced [NADPH--hemoprotein reductase] + O2 = 16alpha-hydroxyestrone + oxidized [NADPH--hemoprotein reductase] + H2O + H(+). It carries out the reaction 17beta-estradiol + reduced [NADPH--hemoprotein reductase] + O2 = 2-hydroxy-17beta-estradiol + oxidized [NADPH--hemoprotein reductase] + H2O + H(+). It catalyses the reaction 17beta-estradiol + reduced [NADPH--hemoprotein reductase] + O2 = 4-hydroxy-17beta-estradiol + oxidized [NADPH--hemoprotein reductase] + H2O + H(+). The enzyme catalyses 17beta-estradiol + reduced [NADPH--hemoprotein reductase] + O2 = 6alpha-hydroxy-17beta-estradiol + oxidized [NADPH--hemoprotein reductase] + H2O + H(+). The catalysed reaction is 17beta-estradiol + reduced [NADPH--hemoprotein reductase] + O2 = 7alpha-hydroxy-17beta-estradiol + oxidized [NADPH--hemoprotein reductase] + H2O + H(+). It carries out the reaction 17beta-estradiol + reduced [NADPH--hemoprotein reductase] + O2 = 15alpha-hydroxy-17beta-estradiol + oxidized [NADPH--hemoprotein reductase] + H2O + H(+). It catalyses the reaction (5Z,8Z,11Z)-eicosatrienoate + reduced [NADPH--hemoprotein reductase] + O2 = 19-hydroxy-(5Z,8Z,11Z)-eicosatrienoate + oxidized [NADPH--hemoprotein reductase] + H2O + H(+). The enzyme catalyses (5Z,8Z,11Z,14Z)-eicosatetraenoate + reduced [NADPH--hemoprotein reductase] + O2 = 16-hydroxy-(5Z,8Z,11Z,14Z)-eicosatetraenoate + oxidized [NADPH--hemoprotein reductase] + H2O + H(+). The catalysed reaction is (5Z,8Z,11Z,14Z)-eicosatetraenoate + reduced [NADPH--hemoprotein reductase] + O2 = 17-hydroxy-(5Z,8Z,11Z,14Z)-eicosatetraenoate + oxidized [NADPH--hemoprotein reductase] + H2O + H(+). It carries out the reaction (5Z,8Z,11Z,14Z)-eicosatetraenoate + reduced [NADPH--hemoprotein reductase] + O2 = 18-hydroxy-(5Z,8Z,11Z,14Z)-eicosatetraenoate + oxidized [NADPH--hemoprotein reductase] + H2O + H(+). It catalyses the reaction (5Z,8Z,11Z,14Z)-eicosatetraenoate + reduced [NADPH--hemoprotein reductase] + O2 = 19-hydroxy-(5Z,8Z,11Z,14Z)-eicosatetraenoate + oxidized [NADPH--hemoprotein reductase] + H2O + H(+). The enzyme catalyses (5Z,8Z,11Z,14Z,17Z)-eicosapentaenoate + reduced [NADPH--hemoprotein reductase] + O2 = 19-hydroxy-(5Z,8Z,11Z,14Z,17Z)-eicosapentaenoate + oxidized [NADPH--hemoprotein reductase] + H2O + H(+). The catalysed reaction is (5Z,8Z,11Z,14Z)-eicosatetraenoate + reduced [NADPH--hemoprotein reductase] + O2 = (8R,9S)-epoxy-(5Z,11Z,14Z)-eicosatrienoate + oxidized [NADPH--hemoprotein reductase] + H2O + H(+). It carries out the reaction (5Z,8Z,11Z,14Z)-eicosatetraenoate + reduced [NADPH--hemoprotein reductase] + O2 = (11R,12S)-epoxy-(5Z,8Z,14Z)-eicosatrienoate + oxidized [NADPH--hemoprotein reductase] + H2O + H(+). It catalyses the reaction (5Z,8Z,11Z,14Z)-eicosatetraenoate + reduced [NADPH--hemoprotein reductase] + O2 = (14S,15R)-epoxy-(5Z,8Z,11Z)-eicosatrienoate + oxidized [NADPH--hemoprotein reductase] + H2O + H(+). The enzyme catalyses (5Z,8Z,11Z,14Z)-eicosatetraenoate + reduced [NADPH--hemoprotein reductase] + O2 = (14R,15S)-epoxy-(5Z,8Z,11Z)-eicosatrienoate + oxidized [NADPH--hemoprotein reductase] + H2O + H(+). The catalysed reaction is (5Z,8Z,11Z,14Z,17Z)-eicosapentaenoate + reduced [NADPH--hemoprotein reductase] + O2 = (17R,18S)-epoxy-(5Z,8Z,11Z,14Z)-eicosatetraenoate + oxidized [NADPH--hemoprotein reductase] + H2O + H(+). It carries out the reaction (4Z,7Z,10Z,13Z,16Z,19Z)-docosahexaenoate + reduced [NADPH--hemoprotein reductase] + O2 = (19S,20R)-epoxy-(4Z,7Z,10Z,13Z,16Z)-docosapentaenoate + oxidized [NADPH--hemoprotein reductase] + H2O + H(+). It catalyses the reaction (4Z,7Z,10Z,13Z,16Z,19Z)-docosahexaenoate + reduced [NADPH--hemoprotein reductase] + O2 = (19R,20S)-epoxy-(4Z,7Z,10Z,13Z,16Z)-docosapentaenoate + oxidized [NADPH--hemoprotein reductase] + H2O + H(+). The enzyme catalyses all-trans-retinol + reduced [NADPH--hemoprotein reductase] + O2 = all-trans-retinal + oxidized [NADPH--hemoprotein reductase] + 2 H2O + H(+). The catalysed reaction is all-trans-retinal + reduced [NADPH--hemoprotein reductase] + O2 = all-trans-retinoate + oxidized [NADPH--hemoprotein reductase] + H2O + 2 H(+). It carries out the reaction (13S)-hydroperoxy-(9Z,11E)-octadecadienoate = 13-oxo-(9Z,11E)-octadecadienoate + H2O. It catalyses the reaction (12S)-hydroperoxy-(5Z,8Z,10E,14Z)-eicosatetraenoate = 12-oxo-(5Z,8Z,10E,14Z)-eicosatetraenoate + H2O. The enzyme catalyses (15S)-hydroperoxy-(5Z,8Z,11Z,13E)-eicosatetraenoate = 15-oxo-(5Z,8Z,11Z,13E)-eicosatetraenoate + H2O. The catalysed reaction is (5S)-hydroperoxy-(6E,8Z,11Z,14Z)-eicosatetraenoate = 5-oxo-(6E,8Z,11Z,14Z)-eicosatetraenoate + H2O. The protein operates within steroid hormone biosynthesis. It functions in the pathway lipid metabolism; fatty acid metabolism. It participates in cofactor metabolism; retinol metabolism. In terms of biological role, a cytochrome P450 monooxygenase involved in the metabolism of various endogenous substrates, including fatty acids, steroid hormones and vitamins. Mechanistically, uses molecular oxygen inserting one oxygen atom into a substrate, and reducing the second into a water molecule, with two electrons provided by NADPH via cytochrome P450 reductase (CPR; NADPH-ferrihemoprotein reductase). Catalyzes the hydroxylation of carbon-hydrogen bonds. Exhibits high catalytic activity for the formation of hydroxyestrogens from estrone (E1) and 17beta-estradiol (E2), namely 2-hydroxy E1 and E2, as well as D-ring hydroxylated E1 and E2 at the C15alpha and C16alpha positions. Displays different regioselectivities for polyunsaturated fatty acids (PUFA) hydroxylation. Catalyzes the epoxidation of double bonds of certain PUFA. Converts arachidonic acid toward epoxyeicosatrienoic acid (EET) regioisomers, 8,9-, 11,12-, and 14,15-EET, that function as lipid mediators in the vascular system. Displays an absolute stereoselectivity in the epoxidation of eicosapentaenoic acid (EPA) producing the 17(R),18(S) enantiomer. May play an important role in all-trans retinoic acid biosynthesis in extrahepatic tissues. Catalyzes two successive oxidative transformation of all-trans retinol to all-trans retinal and then to the active form all-trans retinoic acid. May also participate in eicosanoids metabolism by converting hydroperoxide species into oxo metabolites (lipoxygenase-like reaction, NADPH-independent). This is Cytochrome P450 1A1 (CYP1A1) from Cavia porcellus (Guinea pig).